The chain runs to 603 residues: Probable HECT-type ubiquitin ligase-interacting protein creD (603 aa).

Disordered stretches follow at residues 375–398 (ELDP…GTLS) and 432–499 (LNIT…MATP). Over residues 443–455 (TDHESQNDSEHRR) the composition is skewed to basic and acidic residues. The segment covering 465–481 (PSSGSNSHSPSSPVLSR) has biased composition (low complexity). The segment covering 482-492 (RPSDEVDHEHV) has biased composition (basic and acidic residues).

Belongs to the arrestin family. In terms of assembly, interacts with hulA.

Its function is as follows. Component of the regulatory network controlling carbon source utilization through ubiquitination and deubiquitination involving creA, creB, creC, creD and acrB. May be involved in signaling by recognizing appropriately phosphorylated substrates via its arrestin domains and then recruit a HECT-type ubiquitin ligase such as hulA, leading to ubiquitination of the substrate, providing a link between ubiquitination and phosphorylation in protein regulation and stability. In Aspergillus flavus (strain ATCC 200026 / FGSC A1120 / IAM 13836 / NRRL 3357 / JCM 12722 / SRRC 167), this protein is Probable HECT-type ubiquitin ligase-interacting protein creD (creD).